The following is a 508-amino-acid chain: Fc receptor-like protein 2 (508 aa).

The N-terminal stretch at 1–19 is a signal peptide; the sequence is MLLWSLLVIFDAVTEQADS. 4 consecutive Ig-like C2-type domains span residues 20 to 98, 109 to 187, 201 to 290, and 300 to 387; these read LTLV…SNIV, PVLT…HRIR, PISN…KVVN, and PVLT…VSIS. The Extracellular portion of the chain corresponds to 20 to 401; the sequence is LTLVAPSSVF…YRRDLMTAGV (382 aa). A disulfide bridge connects residues cysteine 128 and cysteine 177. N-linked (GlcNAc...) asparagine glycans are attached at residues asparagine 204, asparagine 234, asparagine 343, asparagine 355, and asparagine 365. 2 disulfides stabilise this stretch: cysteine 226–cysteine 275 and cysteine 321–cysteine 368. The helical transmembrane segment at 402–422 threads the bilayer; it reads LWGLFGVLGFTGVALLLYALF. Topologically, residues 423 to 508 are cytoplasmic; sequence HKISGESSAT…QVIYSSVKKS (86 aa). Residues 429-453 form a disordered region; the sequence is SSATNEPRGASRPNPQEFTYSSPTP. Positions 441–452 are enriched in polar residues; sequence PNPQEFTYSSPT. 4 short sequence motifs (ITIM motif) span residues 446–451, 460–465, 472–477, and 500–505; these read FTYSSP, PVYVNV, VVYSQV, and VIYSSV.

The tyrosine-phosphorylated isoform 2 interacts with PTPN6. Isoform 2 is N- and O-glycosylated, and phosphorylated. As to expression, expressed in the secondary lymphoid organs, spleen and lymph node. Expression is limited to the mature B-cell lines. Highly expressed in CD19 and within the mantle zones of the tonsil tissue. Isoform 2 is expressed in the spleen, peripheral blood and bone marrow. Isoform 2 and isoform 4 are expressed in B-cell lines. Preferentially expressed in memory B-cells (at protein level).

Its subcellular location is the cell membrane. In terms of biological role, may have an regulatory role in normal and neoplastic B cell development. In Homo sapiens (Human), this protein is Fc receptor-like protein 2 (FCRL2).